The primary structure comprises 535 residues: Solute carrier family 22 member 7 (535 aa).

A run of 12 helical transmembrane segments spans residues 21 to 41 (LVLM…PVFM), 144 to 164 (ITST…GYLS), 178 to 198 (VSSL…MFVV), 202 to 222 (LTGS…LEWL), 232 to 252 (VIST…GYLI), 257 to 277 (WLLL…WWVP), 344 to 364 (ISLC…GLTL), 375 to 395 (QTQL…YFLV), 402 to 422 (LTEA…LLVS), 429 to 449 (ITAL…TAYL), 464 to 484 (LGLT…AALL), and 489 to 509 (LLLP…TALL).

Belongs to the major facilitator (TC 2.A.1) superfamily. Organic cation transporter (TC 2.A.1.19) family. Expressed in liver and kidney. Expressed at low levels in adipose tissue. Expressed in fetal liver. In kidney, expressed at the brush border of the proximal tubule S3 segment (S3) in the outer stripe and medullary rays. In kidney, expression is higher in female than male.

It is found in the basolateral cell membrane. The protein resides in the apical cell membrane. The protein localises to the cell membrane. It catalyses the reaction orotate(out) + L-glutamate(in) = orotate(in) + L-glutamate(out). It carries out the reaction 3',5'-cyclic GMP(in) = 3',5'-cyclic GMP(out). The catalysed reaction is GMP(in) = GMP(out). The enzyme catalyses 2'-deoxyguanosine(in) = 2'-deoxyguanosine(out). It catalyses the reaction GDP(in) = GDP(out). It carries out the reaction guanosine(in) = guanosine(out). The catalysed reaction is GTP(in) = GTP(out). The enzyme catalyses 3',5'-cyclic AMP(in) = 3',5'-cyclic AMP(out). It catalyses the reaction creatinine(in) = creatinine(out). It carries out the reaction prostaglandin E2(out) = prostaglandin E2(in). The catalysed reaction is 2-oxoglutarate(in) = 2-oxoglutarate(out). The enzyme catalyses glutarate(in) = glutarate(out). It catalyses the reaction urate(out) = urate(in). It carries out the reaction estrone 3-sulfate(out) = estrone 3-sulfate(in). Its function is as follows. Functions as a Na(+)-independent bidirectional multispecific transporter. Contributes to the renal and hepatic elimination of endogenous organic compounds from the systemic circulation into the urine and bile, respectively. Capable of transporting a wide range of purine and pyrimidine nucleobases, nucleosides, and nucleotides with cGMP, 2'deoxyguanosine and GMP being the preferred substrates. Functions as a pH- and chloride-independent cGMP bidirectional facilitative transporter that can regulate both intracellular and extracellular levels of cGMP and may be involved in cGMP signaling pathways. Mediates orotate/glutamate bidirectional exchange and most likely display a physiological role in hepatic release of glutamate into the blood. Involved in renal secretion and possible reabsorption of creatinine. Able to uptake prostaglandin E2 (PGE2) and may contribute to PGE2 renal excretion. Also transports alpha-ketoglutarate and urate. Apart from the orotate/glutamate exchange, the counterions for the uptake of other SLC22A7/OAT2 substrates remain to be identified. The polypeptide is Solute carrier family 22 member 7 (Rattus norvegicus (Rat)).